Consider the following 184-residue polypeptide: ATP synthase subunit b, chloroplastic (184 aa).

A helical membrane pass occupies residues 27–49; that stretch reads LATNPINLSVVLGVLIFFGKGVL.

This sequence belongs to the ATPase B chain family. F-type ATPases have 2 components, F(1) - the catalytic core - and F(0) - the membrane proton channel. F(1) has five subunits: alpha(3), beta(3), gamma(1), delta(1), epsilon(1). F(0) has four main subunits: a(1), b(1), b'(1) and c(10-14). The alpha and beta chains form an alternating ring which encloses part of the gamma chain. F(1) is attached to F(0) by a central stalk formed by the gamma and epsilon chains, while a peripheral stalk is formed by the delta, b and b' chains.

The protein resides in the plastid. It is found in the chloroplast thylakoid membrane. F(1)F(0) ATP synthase produces ATP from ADP in the presence of a proton or sodium gradient. F-type ATPases consist of two structural domains, F(1) containing the extramembraneous catalytic core and F(0) containing the membrane proton channel, linked together by a central stalk and a peripheral stalk. During catalysis, ATP synthesis in the catalytic domain of F(1) is coupled via a rotary mechanism of the central stalk subunits to proton translocation. Its function is as follows. Component of the F(0) channel, it forms part of the peripheral stalk, linking F(1) to F(0). This is ATP synthase subunit b, chloroplastic from Pelargonium hortorum (Common geranium).